The following is a 993-amino-acid chain: uncharacterized protein (993 aa).

An N-terminal signal peptide occupies residues M1–S24. Residues N7, N44, N89, N121, N138, N161, N169, N232, N361, N386, N393, N423, N447, N480, and N488 are each glycosylated (N-linked (GlcNAc...) asparagine). Residue E504 is part of the active site. N-linked (GlcNAc...) asparagine glycosylation is found at N545, N548, and N614. Catalysis depends on D672, which acts as the Proton donor. N673, N814, N826, N835, N846, N910, N940, and N987 each carry an N-linked (GlcNAc...) asparagine glycan.

Belongs to the glycosyl hydrolase 31 family.

This is an uncharacterized protein from Schizosaccharomyces pombe (strain 972 / ATCC 24843) (Fission yeast).